The following is a 148-amino-acid chain: 18 kDa antigen (148 aa).

Residues 21 to 131 (TSARPAVMPM…KPRKISVDRG (111 aa)) enclose the sHSP domain.

Belongs to the small heat shock protein (HSP20) family.

In terms of biological role, not known. This protein is one of the major immune reactive proteins in mycobacteria. This is 18 kDa antigen (hsp18) from Mycobacterium leprae (strain TN).